A 456-amino-acid chain; its full sequence is Smoothelin-like protein 2 (456 aa).

Positions 24-88 (LEGAVRALHE…RQVEALGLAT (65 aa)) form a coiled coil. Position 96 is a phosphothreonine (T96). Residues S98, S126, and S131 each carry the phosphoserine modification. Polar residues predominate over residues 120–129 (HATFSLSGRS). Disordered stretches follow at residues 120–140 (HATFSLSGRSPSVEHDEASDL), 154–190 (GHQLDAGPANGSSEVQTSSAQEPPRPRPVSLSLRMPH), and 220–310 (VGGF…GAQA). The segment covering 131–140 (SVEHDEASDL) has biased composition (basic and acidic residues). The span at 163–174 (NGSSEVQTSSAQ) shows a compositional bias: polar residues. The span at 242–251 (SSSFTRSLSG) shows a compositional bias: low complexity. Phosphoserine is present on residues S250, S252, and S265. The span at 268–279 (LVTPPQSPPSSQ) shows a compositional bias: pro residues. T270 carries the post-translational modification Phosphothreonine. The residue at position 274 (S274) is a Phosphoserine. Positions 298–308 (RSQTLPRTSGA) are enriched in polar residues. At S339 the chain carries Phosphoserine. The 108-residue stretch at 346 to 453 (SSIKQILLEW…YVQSLYNHLR (108 aa)) folds into the Calponin-homology (CH) domain.

It belongs to the smoothelin family.

This Mus musculus (Mouse) protein is Smoothelin-like protein 2 (Smtnl2).